A 183-amino-acid polypeptide reads, in one-letter code: Large ribosomal subunit protein uL6 (183 aa).

It belongs to the universal ribosomal protein uL6 family. Part of the 50S ribosomal subunit.

Functionally, this protein binds to the 23S rRNA, and is important in its secondary structure. It is located near the subunit interface in the base of the L7/L12 stalk, and near the tRNA binding site of the peptidyltransferase center. The chain is Large ribosomal subunit protein uL6 from Chlamydia abortus (strain DSM 27085 / S26/3) (Chlamydophila abortus).